A 323-amino-acid polypeptide reads, in one-letter code: Putative CDC123-like protein L884 (323 aa).

Belongs to the CDC123 family.

This Acanthamoeba polyphaga mimivirus (APMV) protein is Putative CDC123-like protein L884.